The chain runs to 366 residues: Carbamoyl phosphate synthase small chain (366 aa).

The interval 1–172 is CPSase; that stretch reads MYGILVLEDG…TYNAENEKTS (172 aa). 3 residues coordinate L-glutamine: serine 45, glycine 220, and glycine 222. In terms of domain architecture, Glutamine amidotransferase type-1 spans 172-363; sequence SCVLIDCGVK…VELGIKFKAE (192 aa). The Nucleophile role is filled by cysteine 247. L-glutamine contacts are provided by leucine 248, glutamine 251, asparagine 289, glycine 291, and phenylalanine 292. Catalysis depends on residues histidine 336 and glutamate 338.

This sequence belongs to the CarA family. As to quaternary structure, composed of two chains; the small (or glutamine) chain promotes the hydrolysis of glutamine to ammonia, which is used by the large (or ammonia) chain to synthesize carbamoyl phosphate. Tetramer of heterodimers (alpha,beta)4.

It carries out the reaction hydrogencarbonate + L-glutamine + 2 ATP + H2O = carbamoyl phosphate + L-glutamate + 2 ADP + phosphate + 2 H(+). It catalyses the reaction L-glutamine + H2O = L-glutamate + NH4(+). It functions in the pathway amino-acid biosynthesis; L-arginine biosynthesis; carbamoyl phosphate from bicarbonate: step 1/1. Its pathway is pyrimidine metabolism; UMP biosynthesis via de novo pathway; (S)-dihydroorotate from bicarbonate: step 1/3. In terms of biological role, small subunit of the glutamine-dependent carbamoyl phosphate synthetase (CPSase). CPSase catalyzes the formation of carbamoyl phosphate from the ammonia moiety of glutamine, carbonate, and phosphate donated by ATP, constituting the first step of 2 biosynthetic pathways, one leading to arginine and/or urea and the other to pyrimidine nucleotides. The small subunit (glutamine amidotransferase) binds and cleaves glutamine to supply the large subunit with the substrate ammonia. This chain is Carbamoyl phosphate synthase small chain, found in Methanococcus maripaludis (strain C7 / ATCC BAA-1331).